Consider the following 678-residue polypeptide: Glutamic acid-rich protein (678 aa).

An N-terminal signal peptide occupies residues 1–25 (MNVLFLSYNICILFFVVCTLNFSTK). Residues 56–79 (EKNKDDNSKSETLLKEEKDEKDDV) show a composition bias toward basic and acidic residues. Disordered stretches follow at residues 56–194 (EKNK…NLDE), 225–445 (ISSV…VVKN), and 520–678 (VVPR…NAKI). A compositionally biased stretch (polar residues) spans 80 to 107 (PTTSNDNLKNAHNNNEISSSTDPTNIIN). A compositionally biased stretch (basic and acidic residues) spans 109 to 120 (NDKDNENSVDKK). Tandem repeats lie at residues 120–122 (KKD), 123–125 (KKE), 126–128 (KKH), 129–131 (KKD), 132–134 (KKE), 135–137 (KKE), 138–140 (KKD), 141–143 (KKE), 144–146 (KKD), 147–149 (KKE), 150–152 (KKH), 153–155 (KKE), 156–158 (KKH), 159–161 (KKD), and 162–164 (KKK). The tract at residues 120–164 (KKDKKEKKHKKDKKEKKEKKDKKEKKDKKEKKHKKEKKHKKDKKK) is 15 X 3 AA tandem repeats of K-K-[DEHK]. Residues 121–165 (KDKKEKKHKKDKKEKKEKKDKKEKKDKKEKKHKKEKKHKKDKKKK) are compositionally biased toward basic residues. Basic and acidic residues-rich tracts occupy residues 231-329 (TSND…EEKE) and 371-411 (PEEH…EHKS). 14 consecutive repeat copies span residues 372-376 (EEHKE), 377-381 (GEHKE), 382-386 (EEHKE), 387-391 (GEHKE), 392-396 (GEHKE), 397-401 (EEHKE), 402-406 (EEHKK), 407-411 (EEHKS), 412-416 (KEHKS), 417-421 (KGKKD), 422-426 (KGKKD), 427-431 (KGKHK), 432-436 (KAKKE), and 437-441 (KVKKH). Residues 372–416 (EEHKEGEHKEEEHKEGEHKEGEHKEEEHKEEEHKKEEHKSKEHKS) form a 9 X 5 AA tandem repeats of [EGK]-E-H-K-[EKS] region. The span at 412–443 (KEHKSKGKKDKGKKDKGKHKKAKKEKVKKHVV) shows a compositional bias: basic residues. A 5 X 5 AA tandem repeats of K-[GAV]-K-[KH]-[DKEH] region spans residues 417–441 (KGKKDKGKKDKGKHKKAKKEKVKKH). Positions 532–565 (AKIEEAELQKQKHVDKEEDKKEESKEVQEESKEV) are enriched in basic and acidic residues. Residues 566 to 663 (QEDEEEVEED…EEEEEEEEEE (98 aa)) show a composition bias toward acidic residues. A compositionally biased stretch (basic residues) spans 667 to 678 (KIKRNLRKNAKI).

The polypeptide is Glutamic acid-rich protein (GARP) (Plasmodium falciparum (isolate FC27 / Papua New Guinea)).